Here is a 461-residue protein sequence, read N- to C-terminus: METLFNGTLSLAGRDQETTGFAWWAGNARLINLSGKLLGAHVAHAGLIVFWAGAMNLFEVAHFVPEKPMYEQGLILLPHLATLGWGVGPGGEVIDTFPYFVSGVLHLISSAVLGFGGIYHALLGPETLEESFPFFGYVWKDRNKMTTILGIHLILLGLGAFLLVFKALYFGGVYDTWAPGGGDVRKITNLTLSPSVIFGYLLKSPFGGEGWIVSVDDLEDIIGGHVWLGSICILGGIWHILTKPFAWARRAFVWSGEAYLSYSLAALAVFGFIACCFVWFNNTAYPSEFYGPTGPEASQAQAFTFLVRDQRLGANVGSAQGPTGLGKYLMRSPTGEVIFGGETMRFWDLRAPWLEPLRGPNGLDLSRLKKDIQPWQERRSAEYMTHAPLGSLNSVGGVATEINAVNYVSPRSWLATSHFVLGFFLFVGHLWHAGRARAAAAGFEKGIDRDLEPVLSMTPLN.

A propeptide spanning residues 1–2 (ME) is cleaved from the precursor. An N-acetylthreonine modification is found at T3. Phosphothreonine is present on T3. Transmembrane regions (helical) follow at residues 57–81 (LFEV…PHLA), 122–143 (LLGP…KDRN), 166–188 (KALY…RKIT), 243–263 (KPFA…LSYS), and 279–300 (WFNN…ASQA). [CaMn4O5] cluster is bound at residue E355. A helical membrane pass occupies residues 435 to 459 (RARAAAAGFEKGIDRDLEPVLSMTP).

The protein belongs to the PsbB/PsbC family. PsbC subfamily. As to quaternary structure, PSII is composed of 1 copy each of membrane proteins PsbA, PsbB, PsbC, PsbD, PsbE, PsbF, PsbH, PsbI, PsbJ, PsbK, PsbL, PsbM, PsbT, PsbX, PsbY, PsbZ, Psb30/Ycf12, at least 3 peripheral proteins of the oxygen-evolving complex and a large number of cofactors. It forms dimeric complexes. The cofactor is Binds multiple chlorophylls and provides some of the ligands for the Ca-4Mn-5O cluster of the oxygen-evolving complex. It may also provide a ligand for a Cl- that is required for oxygen evolution. PSII binds additional chlorophylls, carotenoids and specific lipids..

The protein resides in the plastid. Its subcellular location is the chloroplast thylakoid membrane. Functionally, one of the components of the core complex of photosystem II (PSII). It binds chlorophyll and helps catalyze the primary light-induced photochemical processes of PSII. PSII is a light-driven water:plastoquinone oxidoreductase, using light energy to abstract electrons from H(2)O, generating O(2) and a proton gradient subsequently used for ATP formation. The polypeptide is Photosystem II CP43 reaction center protein (Ceratophyllum demersum (Rigid hornwort)).